A 327-amino-acid polypeptide reads, in one-letter code: Undecaprenyl-phosphate 4-deoxy-4-formamido-L-arabinose transferase (327 aa).

Over 1-235 (MFDAAPIKKV…TCLTTTPLRL (235 aa)) the chain is Cytoplasmic. A helical membrane pass occupies residues 236–256 (LSLLGSVIAIGGFSLSVLLIV). At 257–269 (LRLALGPQWAAEG) the chain is on the periplasmic side. The chain crosses the membrane as a helical span at residues 270-290 (VFMLFAVLFTFIGAQFIGMGL). Residues 291–327 (LGEYIGRIYNDVRARPRYFVQQVIYPESTPFTEESHQ) are Cytoplasmic-facing.

It belongs to the glycosyltransferase 2 family.

It is found in the cell inner membrane. It carries out the reaction UDP-4-deoxy-4-formamido-beta-L-arabinose + di-trans,octa-cis-undecaprenyl phosphate = 4-deoxy-4-formamido-alpha-L-arabinopyranosyl di-trans,octa-cis-undecaprenyl phosphate + UDP. It participates in glycolipid biosynthesis; 4-amino-4-deoxy-alpha-L-arabinose undecaprenyl phosphate biosynthesis; 4-amino-4-deoxy-alpha-L-arabinose undecaprenyl phosphate from UDP-4-deoxy-4-formamido-beta-L-arabinose and undecaprenyl phosphate: step 1/2. The protein operates within bacterial outer membrane biogenesis; lipopolysaccharide biosynthesis. Functionally, catalyzes the transfer of 4-deoxy-4-formamido-L-arabinose from UDP to undecaprenyl phosphate. The modified arabinose is attached to lipid A and is required for resistance to polymyxin and cationic antimicrobial peptides. This is Undecaprenyl-phosphate 4-deoxy-4-formamido-L-arabinose transferase from Salmonella agona (strain SL483).